A 231-amino-acid polypeptide reads, in one-letter code: Protein PIMREG (231 aa).

The interval 1–44 (MASQWQGMRTSVRRRSLLKEEQLEKKEVTRSAGGHPETGPLGSL) is disordered. Phosphoserine occurs at positions 11 and 16. Short sequence motifs (D-box) lie at residues 14 to 17 (RRSL) and 53 to 56 (PLRA). Residues 17 to 29 (LLKEEQLEKKEVT) are compositionally biased toward basic and acidic residues. Residue S72 is modified to Phosphoserine. Disordered regions lie at residues 115 to 138 (KVRRKRGAQKDRGSPPPSLSQKNT) and 152 to 197 (HLRL…DLEP). S128 carries the post-translational modification Phosphoserine; by Uhmk1; in vitro. The segment covering 178-190 (PCSSTEPLCSPSE) has biased composition (polar residues). Phosphoserine occurs at positions 191 and 193.

As to quaternary structure, interacts with PICALM; this interaction may target PICALM to the nucleus. During mitosis, associates with HDAC2 and MTA2 subunits of the chromatin-remodeling NuRD complex; this association is strongest at prometaphase and decreases as the cell progresses through metaphase and anaphase. Ubiquitinated by the anaphase-promoting complex/cyclosome (APC/C) complex in the presence of FZR1, leading to its degradation by the proteasome during mitotic exit. However, degradation is not essential for normal mitotic progression within a single cell cycle. Mainly expressed in thymus and ovary. Expressed in all T-cell subpopulations isolated from the thymus, macrophages, pro-erythrocytes, granulocytes, mast cells and progenitor cells.

The protein resides in the nucleus. Its subcellular location is the nucleolus. Its function is as follows. During mitosis, may play a role in the metaphase-to-anaphase transition. The sequence is that of Protein PIMREG from Mus musculus (Mouse).